A 33-amino-acid polypeptide reads, in one-letter code: Beta-amanitin proprotein (33 aa).

Residues 1–10 (MSDINATRLP) constitute a propeptide that is removed on maturation. Residues 11–18 (IWGIGCDP) constitute a cross-link (cyclopeptide (Ile-Pro)). The 2'-cysteinyl-6'-hydroxytryptophan sulfoxide (Trp-Cys) cross-link spans 12–16 (WGIGC). The propeptide occupies 19-33 (CVGDDVTAVLTRGEA).

The protein belongs to the MSDIN fungal toxin family. Post-translationally, processed by the macrocyclase-peptidase enzyme POPB to yield a toxic cyclic decapeptide. POPB first removes 10 residues from the N-terminus. Conformational trapping of the remaining peptide forces the enzyme to release this intermediate rather than proceed to macrocyclization. The enzyme rebinds the remaining peptide in a different conformation and catalyzes macrocyclization of the N-terminal 8 residues.

Toxin belonging to the bicyclic octapeptides amatoxins that acts by binding non-competitively to RNA polymerase II and greatly slowing the elongation of transcripts from target promoters. The chain is Beta-amanitin proprotein from Amanita pallidorosea.